The chain runs to 236 residues: Proteasome subunit alpha (236 aa).

The protein belongs to the peptidase T1A family. The 20S proteasome core is composed of 14 alpha and 14 beta subunits that assemble into four stacked heptameric rings, resulting in a barrel-shaped structure. The two inner rings, each composed of seven catalytic beta subunits, are sandwiched by two outer rings, each composed of seven alpha subunits. The catalytic chamber with the active sites is on the inside of the barrel. Has a gated structure, the ends of the cylinder being occluded by the N-termini of the alpha-subunits. Is capped by the proteasome-associated ATPase, ARC.

The protein resides in the cytoplasm. It functions in the pathway protein degradation; proteasomal Pup-dependent pathway. Its activity is regulated as follows. The formation of the proteasomal ATPase ARC-20S proteasome complex, likely via the docking of the C-termini of ARC into the intersubunit pockets in the alpha-rings, may trigger opening of the gate for substrate entry. Interconversion between the open-gate and close-gate conformations leads to a dynamic regulation of the 20S proteasome proteolysis activity. Functionally, component of the proteasome core, a large protease complex with broad specificity involved in protein degradation. The chain is Proteasome subunit alpha from Jonesia denitrificans (strain ATCC 14870 / DSM 20603 / BCRC 15368 / CIP 55.134 / JCM 11481 / NBRC 15587 / NCTC 10816 / Prevot 55134) (Listeria denitrificans).